Reading from the N-terminus, the 434-residue chain is Trigger factor (434 aa).

In terms of domain architecture, PPIase FKBP-type spans 161–246; that stretch reads EDRVTVDFNG…LKKVEERELP (86 aa).

The protein belongs to the FKBP-type PPIase family. Tig subfamily.

It is found in the cytoplasm. The enzyme catalyses [protein]-peptidylproline (omega=180) = [protein]-peptidylproline (omega=0). In terms of biological role, involved in protein export. Acts as a chaperone by maintaining the newly synthesized protein in an open conformation. Functions as a peptidyl-prolyl cis-trans isomerase. The sequence is that of Trigger factor from Proteus mirabilis (strain HI4320).